The sequence spans 355 residues: UPF0421 protein BALH_2468 (355 aa).

4 consecutive transmembrane segments (helical) span residues 19–39 (IAVF…IFAV), 74–94 (FTFF…FTIV), 109–129 (TLTA…AFLI), and 131–151 (LATT…ILPP).

This sequence belongs to the UPF0421 family.

The protein resides in the cell membrane. This Bacillus thuringiensis (strain Al Hakam) protein is UPF0421 protein BALH_2468.